The following is a 184-amino-acid chain: ATP synthase subunit delta (184 aa).

It belongs to the ATPase delta chain family. F-type ATPases have 2 components, F(1) - the catalytic core - and F(0) - the membrane proton channel. F(1) has five subunits: alpha(3), beta(3), gamma(1), delta(1), epsilon(1). F(0) has three main subunits: a(1), b(2) and c(10-14). The alpha and beta chains form an alternating ring which encloses part of the gamma chain. F(1) is attached to F(0) by a central stalk formed by the gamma and epsilon chains, while a peripheral stalk is formed by the delta and b chains.

It localises to the cell membrane. In terms of biological role, f(1)F(0) ATP synthase produces ATP from ADP in the presence of a proton or sodium gradient. F-type ATPases consist of two structural domains, F(1) containing the extramembraneous catalytic core and F(0) containing the membrane proton channel, linked together by a central stalk and a peripheral stalk. During catalysis, ATP synthesis in the catalytic domain of F(1) is coupled via a rotary mechanism of the central stalk subunits to proton translocation. This protein is part of the stalk that links CF(0) to CF(1). It either transmits conformational changes from CF(0) to CF(1) or is implicated in proton conduction. The sequence is that of ATP synthase subunit delta from Rickettsia africae (strain ESF-5).